Consider the following 296-residue polypeptide: Iron-sulfur cluster carrier protein (296 aa).

A compositionally biased stretch (low complexity) spans 1 to 17; it reads MSSNPFRIQNPQPQPQR. Residues 1-23 form a disordered region; sequence MSSNPFRIQNPQPQPQRQPRDLR. Residue 52-59 participates in ATP binding; sequence GKGGVGKS.

This sequence belongs to the Mrp/NBP35 ATP-binding proteins family. Homodimer.

Binds and transfers iron-sulfur (Fe-S) clusters to target apoproteins. Can hydrolyze ATP. The chain is Iron-sulfur cluster carrier protein from Saccharolobus solfataricus (strain ATCC 35092 / DSM 1617 / JCM 11322 / P2) (Sulfolobus solfataricus).